The sequence spans 566 residues: Ubiquitin carboxyl-terminal hydrolase 21 (566 aa).

2 stretches are compositionally biased toward basic and acidic residues: residues 1 to 14 (MPQASEHRLGRTRE) and 58 to 70 (PPDERLKKLELGR). 2 disordered regions span residues 1-103 (MPQA…LPLP) and 146-169 (PEPPTLRRSTSLRRLGGFPGPPTL). 2 stretches are compositionally biased toward low complexity: residues 71–81 (GRTSGSRPRGP) and 151–160 (LRRSTSLRRL). Residues 134–152 (ELGAALSRLALRPEPPTLR) carry the Nuclear export signal motif. The region spanning 212–559 (VGLRNLGNTC…EGYVLFYQLM (348 aa)) is the USP domain. C221 (nucleophile) is an active-site residue. Residues 324–349 (APPILASGPVPSPPRRGGGALHEEPE) are disordered. C385, C388, C438, and C441 together coordinate Zn(2+). H519 functions as the Proton acceptor in the catalytic mechanism.

This sequence belongs to the peptidase C19 family. USP21 subfamily. Interacts with BEND3.

Its subcellular location is the cytoplasm. The protein resides in the nucleus. It carries out the reaction Thiol-dependent hydrolysis of ester, thioester, amide, peptide and isopeptide bonds formed by the C-terminal Gly of ubiquitin (a 76-residue protein attached to proteins as an intracellular targeting signal).. In terms of biological role, deubiquitinates histone H2A, a specific tag for epigenetic transcriptional repression, thereby acting as a coactivator. Deubiquitination of histone H2A releaves the repression of di- and trimethylation of histone H3 at 'Lys-4', resulting in regulation of transcriptional initiation. Regulates gene expression via histone H2A deubiquitination. Deubiquitinates BAZ2A/TIP5 leading to its stabilization. Also capable of removing NEDD8 from NEDD8 conjugates but has no effect on Sentrin-1 conjugates. Also acts as a negative regulator of the ribosome quality control (RQC) by mediating deubiquitination of 40S ribosomal proteins RPS10/eS10 and RPS20/uS10, thereby antagonizing ZNF598-mediated 40S ubiquitination. In Mus musculus (Mouse), this protein is Ubiquitin carboxyl-terminal hydrolase 21.